Consider the following 481-residue polypeptide: Putative cytochrome P450 520B1 (481 aa).

Cysteine 427 provides a ligand contact to heme.

This sequence belongs to the cytochrome P450 family. Requires heme as cofactor.

The sequence is that of Putative cytochrome P450 520B1 (cyp520B1) from Dictyostelium discoideum (Social amoeba).